A 224-amino-acid chain; its full sequence is Protein GrpE (224 aa).

A disordered region spans residues 27 to 77; sequence NQASEDIDQENQSEVVDDTTENEDASEEVYEEDTASEDGSKEKKSFFKKKE. A compositionally biased stretch (acidic residues) spans 31 to 62; that stretch reads EDIDQENQSEVVDDTTENEDASEEVYEEDTAS.

It belongs to the GrpE family. As to quaternary structure, homodimer.

It localises to the cytoplasm. Functionally, participates actively in the response to hyperosmotic and heat shock by preventing the aggregation of stress-denatured proteins, in association with DnaK and GrpE. It is the nucleotide exchange factor for DnaK and may function as a thermosensor. Unfolded proteins bind initially to DnaJ; upon interaction with the DnaJ-bound protein, DnaK hydrolyzes its bound ATP, resulting in the formation of a stable complex. GrpE releases ADP from DnaK; ATP binding to DnaK triggers the release of the substrate protein, thus completing the reaction cycle. Several rounds of ATP-dependent interactions between DnaJ, DnaK and GrpE are required for fully efficient folding. This chain is Protein GrpE, found in Lachnoclostridium phytofermentans (strain ATCC 700394 / DSM 18823 / ISDg) (Clostridium phytofermentans).